Here is a 337-residue protein sequence, read N- to C-terminus: DNA-directed RNA polymerase subunit alpha (337 aa).

Positions 1-233 are alpha N-terminal domain (alpha-NTD); the sequence is MIQKNWQELI…DQLSLFVNFE (233 aa). The tract at residues 249-337 is alpha C-terminal domain (alpha-CTD); the sequence is FNPALLKKVD…DLAKRYEDQY (89 aa).

This sequence belongs to the RNA polymerase alpha chain family. In terms of assembly, homodimer. The RNAP catalytic core consists of 2 alpha, 1 beta, 1 beta' and 1 omega subunit. When a sigma factor is associated with the core the holoenzyme is formed, which can initiate transcription.

The enzyme catalyses RNA(n) + a ribonucleoside 5'-triphosphate = RNA(n+1) + diphosphate. In terms of biological role, DNA-dependent RNA polymerase catalyzes the transcription of DNA into RNA using the four ribonucleoside triphosphates as substrates. This is DNA-directed RNA polymerase subunit alpha from Bartonella quintana (strain Toulouse) (Rochalimaea quintana).